The sequence spans 465 residues: MESLRIYNTLARDKQVFVPRQSGEVRMYVCGITVYDYCHVGHARMLVVFDLVQRWLRAIGYRVTYVRNITDIDDKIIRRAVENGETIKSLTDRFIGAMHDDESALGIQRPDIEPRATEFIPQMLGMIETLETNGYAYQATDGDVNYSVRKFANYGKLSGKSLDDLRAGERVAANDAKEDPLDFVLWKRAKPEDPEGTSWASKYGMGRPGWHIECSAMGCTLLGEHFDIHGGGQDLQFPHHENEIAQSEGATGQTFVNYWMHNGFVQVDNEKMSKSLGNFFTIREVLERYDAEVMRFFIVRTHYRSPLNYSDVHLDDARASLTRLYTALKDVEADTLALDWNEPHAQRFAAAMNDDFNTPVAVATLFELAGEVNRTRDASLARQLKQLAGLLGLLGREPRAFLQQASGAAQAGGLAADEIEAKIAARVAAKQAKDYAEADRIRAELLETGIALEDKPGGSTEWRRV.

A Zn(2+)-binding site is contributed by Cys-30. The short motif at 32–42 is the 'HIGH' region element; it reads ITVYDYCHVGH. Zn(2+) is bound by residues Cys-214, His-239, and Glu-243. The short motif at 271 to 275 is the 'KMSKS' region element; the sequence is KMSKS. Lys-274 serves as a coordination point for ATP.

Belongs to the class-I aminoacyl-tRNA synthetase family. Monomer. The cofactor is Zn(2+).

The protein resides in the cytoplasm. The enzyme catalyses tRNA(Cys) + L-cysteine + ATP = L-cysteinyl-tRNA(Cys) + AMP + diphosphate. The chain is Cysteine--tRNA ligase 2 from Burkholderia lata (strain ATCC 17760 / DSM 23089 / LMG 22485 / NCIMB 9086 / R18194 / 383).